Here is a 634-residue protein sequence, read N- to C-terminus: MSDSFYRYDVIVIGGGHAGTEAALASARAGARTLLLTHNIETVGAMSCNPAIGGIGKGHLVKEIDALGGAMARAADLAGIQWRTLNASKGPAVRATRCQADRNLYRTAIRCIVEAQPNLTVFQAAVDDLIIHHGASEADSVRGVITQTGLRFQAPSVVLTAGTFLAGKIHVGQTQYAAGRMGDPPATTLAARLRERPFAIDRLKTGTPPRIDGRTLDYGVMAEQPGDDPLPVMSFMGQVSDHPRQVSCWITQTTEQTHEIIRNALHRSPLYSGQIEGIGPRYCPSIEDKVVRFAEKTSHQIFVEPEGLEVAEIYPNGISTSLPFDVQLALVRSIHGFANAHITRPGYAIEYDFFDPRGLKASLETKAVGGLFFAGQINGTTGYEEAAAQGLLAGLNAARHVQGLPAWSPRRDEAYLGVLVDDLITHGTTEPYRMFTSRAEYRLQLREDNADARLTGVGRAMGLVDDARWARFAAKQEAVQRETARLSALWATPGNALGREVADALGVTVSRETNVLDLIKRPELTYATLMRVPTLGPGVDDAQVAEQVEISVKYAGYLDRQRDDIARQQRHETTPIPDGFDYASVRGLSIEVQQKLERVRPQHIGQAQRIPGMTPAAISLLLVHLERARRSQVA.

14 to 19 lines the FAD pocket; that stretch reads GGGHAG. 279–293 is a binding site for NAD(+); the sequence is GPRYCPSIEDKVVRF.

It belongs to the MnmG family. In terms of assembly, homodimer. Heterotetramer of two MnmE and two MnmG subunits. Requires FAD as cofactor.

The protein resides in the cytoplasm. Its function is as follows. NAD-binding protein involved in the addition of a carboxymethylaminomethyl (cmnm) group at the wobble position (U34) of certain tRNAs, forming tRNA-cmnm(5)s(2)U34. This is tRNA uridine 5-carboxymethylaminomethyl modification enzyme MnmG from Xanthomonas axonopodis pv. citri (strain 306).